The primary structure comprises 497 residues: CRISPR-associated endodeoxyribonuclease Cas12f1 (497 aa).

The segment at 29–122 (RKDLSTMSRF…PTYKITTAPI (94 aa)) is recognition domain (REC). The tract at residues 123–214 (RLQNNIYKLI…YCIIPYTFPT (92 aa)) is wedge domain (WED). Positions 215–223 (HETVLDPDK) are linker. The interval 224 to 374 (VMGVDLGVAK…VAINPQYTSQ (151 aa)) is ruvC-I. Catalysis depends on residues Asp228 and Glu327. A target nucleic acid-binding (TNB) region spans residues 375–432 (RCSMCGYIEKTNRSSQAVFECKQCGYGSRTICINCRHVQVSGDVCEECGGIVKKENVN). 4 residues coordinate Zn(2+): Cys376, Cys379, Cys395, and Cys398. Residues 433-453 (ADYNAAKNISTPYIDQIIMEK) are ruvC-II. Residue Asp434 is part of the active site.

The protein belongs to the CRISPR-associated endonuclease Cas12f family. In terms of assembly, an asymmetric homodimer. Guide RNA is probably required for dimerization. It depends on Mg(2+) as a cofactor. The cofactor is Zn(2+).

Its function is as follows. CRISPR (clustered regularly interspaced short palindromic repeat), is an adaptive immune system that provides protection against mobile genetic elements (viruses, transposable elements and conjugative plasmids). CRISPR clusters contain sequences complementary to antecedent mobile elements and target invading nucleic acids. CRISPR clusters are transcribed and processed into CRISPR RNA (crRNA), which requires a trans-encoded small RNA (tracrRNA), but not this protein. Recognizes a short motif in the CRISPR repeat sequences (the 5' PAM or protospacer adjacent motif, TTC in this organism) to help distinguish self versus nonself, as targets within the CRISPR locus do not have PAMs. Has dsDNA endonuclease activity upon expression in E.coli of this protein, a mini CRISPR array and the probable tracrRNA. Plasmid cleavage is centered around positions 24 base pairs 3' of PAM. The mini system protects E.coli against transformation by foreign plasmids. The protein is CRISPR-associated endodeoxyribonuclease Cas12f1 of Syntrophomonas palmitatica (strain DSM 18709 / JCM 14374 / NBRC 102128 / MPA).